A 554-amino-acid chain; its full sequence is Myo-inositol transporter 1 (554 aa).

The segment covering 1-13 has biased composition (polar residues); that stretch reads MGSSTNNTQSKAT. The segment at 1–57 is disordered; that stretch reads MGSSTNNTQSKATPSVLENEVNSSKSSVVSSTSSAKGLLRETTNHGTMETSSVQISE. Asn-6 and Asn-22 each carry an N-linked (GlcNAc...) asparagine glycan. Low complexity predominate over residues 15 to 34; it reads SVLENEVNSSKSSVVSSTSS. Over residues 44-57 the composition is skewed to polar residues; it reads NHGTMETSSVQISE. 6 consecutive transmembrane segments (helical) span residues 65–85, 110–130, 144–164, 167–187, 196–216, and 227–247; these read MVLV…YDTG, FITS…GVLA, IIFV…TMIA, FVLG…ISEL, LIVT…FINW, and VSVG…WFLP. A glycan (N-linked (GlcNAc...) asparagine) is linked at Asn-279. Residues 313-332 traverse the membrane as a helical segment; it reads GNFRALILACGLQGIQQFTG. Asn-351 carries N-linked (GlcNAc...) asparagine glycosylation. Transmembrane regions (helical) follow at residues 354–374, 382–402, 420–440, 459–479, and 490–510; these read AVSI…ICII, ILLV…VAFH, GWGI…AIGI, IGAM…ASTF, and GTFS…YFLL.

The protein belongs to the major facilitator superfamily. Sugar transporter (TC 2.A.1.1) family.

The protein resides in the cell membrane. The enzyme catalyses myo-inositol(out) + H(+)(out) = myo-inositol(in) + H(+)(in). Functionally, major transporter for myo-inositol. The polypeptide is Myo-inositol transporter 1 (Candida albicans (strain SC5314 / ATCC MYA-2876) (Yeast)).